The following is a 503-amino-acid chain: Aspartyl/glutamyl-tRNA(Asn/Gln) amidotransferase subunit B (503 aa).

Belongs to the GatB/GatE family. GatB subfamily. In terms of assembly, heterotrimer of A, B and C subunits.

The catalysed reaction is L-glutamyl-tRNA(Gln) + L-glutamine + ATP + H2O = L-glutaminyl-tRNA(Gln) + L-glutamate + ADP + phosphate + H(+). It catalyses the reaction L-aspartyl-tRNA(Asn) + L-glutamine + ATP + H2O = L-asparaginyl-tRNA(Asn) + L-glutamate + ADP + phosphate + 2 H(+). Functionally, allows the formation of correctly charged Asn-tRNA(Asn) or Gln-tRNA(Gln) through the transamidation of misacylated Asp-tRNA(Asn) or Glu-tRNA(Gln) in organisms which lack either or both of asparaginyl-tRNA or glutaminyl-tRNA synthetases. The reaction takes place in the presence of glutamine and ATP through an activated phospho-Asp-tRNA(Asn) or phospho-Glu-tRNA(Gln). This is Aspartyl/glutamyl-tRNA(Asn/Gln) amidotransferase subunit B from Nocardia farcinica (strain IFM 10152).